The chain runs to 438 residues: Serine hydroxymethyltransferase 1 (438 aa).

(6S)-5,6,7,8-tetrahydrofolate-binding positions include Leu130 and 134–136 (GHL). Residue Lys239 is modified to N6-(pyridoxal phosphate)lysine.

This sequence belongs to the SHMT family. Homodimer. Requires pyridoxal 5'-phosphate as cofactor.

Its subcellular location is the cytoplasm. It carries out the reaction (6R)-5,10-methylene-5,6,7,8-tetrahydrofolate + glycine + H2O = (6S)-5,6,7,8-tetrahydrofolate + L-serine. Its pathway is one-carbon metabolism; tetrahydrofolate interconversion. It functions in the pathway amino-acid biosynthesis; glycine biosynthesis; glycine from L-serine: step 1/1. Catalyzes the reversible interconversion of serine and glycine with tetrahydrofolate (THF) serving as the one-carbon carrier. This reaction serves as the major source of one-carbon groups required for the biosynthesis of purines, thymidylate, methionine, and other important biomolecules. Also exhibits THF-independent aldolase activity toward beta-hydroxyamino acids, producing glycine and aldehydes, via a retro-aldol mechanism. The polypeptide is Serine hydroxymethyltransferase 1 (Mycobacterium tuberculosis (strain CDC 1551 / Oshkosh)).